The following is a 493-amino-acid chain: Aspartyl/glutamyl-tRNA(Asn/Gln) amidotransferase subunit B (493 aa).

The tract at residues 268–291 (HYQEADGSTSKGRPKETAEDYRYF) is disordered. A compositionally biased stretch (basic and acidic residues) spans 280-291 (RPKETAEDYRYF).

Belongs to the GatB/GatE family. GatB subfamily. In terms of assembly, heterotrimer of A, B and C subunits.

It carries out the reaction L-glutamyl-tRNA(Gln) + L-glutamine + ATP + H2O = L-glutaminyl-tRNA(Gln) + L-glutamate + ADP + phosphate + H(+). The catalysed reaction is L-aspartyl-tRNA(Asn) + L-glutamine + ATP + H2O = L-asparaginyl-tRNA(Asn) + L-glutamate + ADP + phosphate + 2 H(+). In terms of biological role, allows the formation of correctly charged Asn-tRNA(Asn) or Gln-tRNA(Gln) through the transamidation of misacylated Asp-tRNA(Asn) or Glu-tRNA(Gln) in organisms which lack either or both of asparaginyl-tRNA or glutaminyl-tRNA synthetases. The reaction takes place in the presence of glutamine and ATP through an activated phospho-Asp-tRNA(Asn) or phospho-Glu-tRNA(Gln). This chain is Aspartyl/glutamyl-tRNA(Asn/Gln) amidotransferase subunit B, found in Corynebacterium glutamicum (strain ATCC 13032 / DSM 20300 / JCM 1318 / BCRC 11384 / CCUG 27702 / LMG 3730 / NBRC 12168 / NCIMB 10025 / NRRL B-2784 / 534).